A 155-amino-acid chain; its full sequence is Ribosomal RNA large subunit methyltransferase H (155 aa).

S-adenosyl-L-methionine is bound by residues Leu-72, Gly-103, and Leu-122–Leu-127.

This sequence belongs to the RNA methyltransferase RlmH family. In terms of assembly, homodimer.

The protein resides in the cytoplasm. It catalyses the reaction pseudouridine(1915) in 23S rRNA + S-adenosyl-L-methionine = N(3)-methylpseudouridine(1915) in 23S rRNA + S-adenosyl-L-homocysteine + H(+). Specifically methylates the pseudouridine at position 1915 (m3Psi1915) in 23S rRNA. This is Ribosomal RNA large subunit methyltransferase H from Mannheimia succiniciproducens (strain KCTC 0769BP / MBEL55E).